The sequence spans 270 residues: Interleukin-1 beta (270 aa).

Residues 1–118 (MATVPEPTSE…VYDDDAFVCD (118 aa)) constitute a propeptide that is removed on maturation.

This sequence belongs to the IL-1 family. In terms of assembly, monomer. In its precursor form, weakly interacts with full-length MEFV; the mature cytokine does not interact at all. Interacts with integrins ITGAV:ITGBV and ITGA5:ITGB1; integrin-binding is required for IL1B signaling. Interacts with cargo receptor TMED10; the interaction is direct and is required for the secretion of IL1B mature form. Interacts with HSP90AB1; the interaction facilitates cargo translocation into the ERGIC. Interacts with HSP90B1; the interaction facilitates cargo translocation into the ERGIC.

The protein resides in the cytoplasm. Its subcellular location is the cytosol. It localises to the secreted. It is found in the lysosome. The protein localises to the extracellular exosome. Its function is as follows. Potent pro-inflammatory cytokine. Initially discovered as the major endogenous pyrogen, induces prostaglandin synthesis, neutrophil influx and activation, T-cell activation and cytokine production, B-cell activation and antibody production, and fibroblast proliferation and collagen production. Promotes Th17 differentiation of T-cells. Synergizes with IL12/interleukin-12 to induce IFNG synthesis from T-helper 1 (Th1) cells. Plays a role in angiogenesis by inducing VEGF production synergistically with TNF and IL6. Involved in transduction of inflammation downstream of pyroptosis: its mature form is specifically released in the extracellular milieu by passing through the gasdermin-D (GSDMD) pore. The chain is Interleukin-1 beta (IL1B) from Phoca vitulina richardii (Pacific harbor seal).